The following is a 248-amino-acid chain: Myelin protein P0 (248 aa).

A signal peptide spans 1 to 29 (MAPGAPSSSPSPILAALLFSSLVLSPAQA). The Ig-like V-type domain maps to 30-143 (IVVYTDKEVY…DIVGKTSQVT (114 aa)). Topologically, residues 30–153 (IVVYTDKEVY…LYVFEKVPTR (124 aa)) are extracellular. Cysteines 50 and 127 form a disulfide. N122 carries N-linked (GlcNAc...) (complex) asparagine glycosylation. A helical membrane pass occupies residues 154–179 (YGVVLGAVIGGVLGVVLLVLLLFYVV). The Cytoplasmic segment spans residues 180–248 (RYCWLRRQAA…GLGESRKDKK (69 aa)). A Phosphoserine; by PKC modification is found at S210. Residues 222 to 248 (MLDHSRSTKAASEKKAKGLGESRKDKK) form a disordered region. The segment covering 224 to 248 (DHSRSTKAASEKKAKGLGESRKDKK) has biased composition (basic and acidic residues). A phosphoserine mark is found at S226 and S228. 2 positions are modified to phosphoserine; by PKC: S233 and S243.

It belongs to the myelin P0 protein family. Homodimer and homotetramer. In terms of processing, N-glycosylated; contains sulfate-substituted glycan.

It localises to the cell membrane. Functionally, is an adhesion molecule necessary for normal myelination in the peripheral nervous system. It mediates adhesion between adjacent myelin wraps and ultimately drives myelin compaction. This Equus caballus (Horse) protein is Myelin protein P0 (MPZ).